A 110-amino-acid chain; its full sequence is Nucleoid-associated protein ESA_02800 (110 aa).

The disordered stretch occupies residues 89 to 110 (QKEKMASVSSGMQLPPGFKMPF).

This sequence belongs to the YbaB/EbfC family. Homodimer.

It localises to the cytoplasm. The protein resides in the nucleoid. Its function is as follows. Binds to DNA and alters its conformation. May be involved in regulation of gene expression, nucleoid organization and DNA protection. The protein is Nucleoid-associated protein ESA_02800 of Cronobacter sakazakii (strain ATCC BAA-894) (Enterobacter sakazakii).